A 176-amino-acid polypeptide reads, in one-letter code: NAD(P)H-quinone oxidoreductase subunit 6, chloroplastic (176 aa).

5 consecutive transmembrane segments (helical) span residues 10–30 (FLLV…VLLP), 33–53 (IYSA…YILL), 61–81 (AQLL…VMFM), 92–112 (LWTI…ISLI), and 152–172 (FFLP…GAIA).

Belongs to the complex I subunit 6 family. NDH is composed of at least 16 different subunits, 5 of which are encoded in the nucleus.

The protein resides in the plastid. It localises to the chloroplast thylakoid membrane. The catalysed reaction is a plastoquinone + NADH + (n+1) H(+)(in) = a plastoquinol + NAD(+) + n H(+)(out). The enzyme catalyses a plastoquinone + NADPH + (n+1) H(+)(in) = a plastoquinol + NADP(+) + n H(+)(out). Functionally, NDH shuttles electrons from NAD(P)H:plastoquinone, via FMN and iron-sulfur (Fe-S) centers, to quinones in the photosynthetic chain and possibly in a chloroplast respiratory chain. The immediate electron acceptor for the enzyme in this species is believed to be plastoquinone. Couples the redox reaction to proton translocation, and thus conserves the redox energy in a proton gradient. The protein is NAD(P)H-quinone oxidoreductase subunit 6, chloroplastic (ndhG) of Coffea arabica (Arabian coffee).